The following is a 252-amino-acid chain: Hydroxyacylglutathione hydrolase (252 aa).

Positions 54, 56, 58, 59, 111, 128, and 166 each coordinate Zn(2+).

Belongs to the metallo-beta-lactamase superfamily. Glyoxalase II family. In terms of assembly, monomer. Zn(2+) serves as cofactor.

The catalysed reaction is an S-(2-hydroxyacyl)glutathione + H2O = a 2-hydroxy carboxylate + glutathione + H(+). It participates in secondary metabolite metabolism; methylglyoxal degradation; (R)-lactate from methylglyoxal: step 2/2. Its function is as follows. Thiolesterase that catalyzes the hydrolysis of S-D-lactoyl-glutathione to form glutathione and D-lactic acid. The protein is Hydroxyacylglutathione hydrolase of Vibrio parahaemolyticus serotype O3:K6 (strain RIMD 2210633).